A 673-amino-acid polypeptide reads, in one-letter code: Polyadenylate-binding protein, cytoplasmic and nuclear (673 aa).

Residues 1–39 (MSAETATSPAPAAETPVAPAPATQTTPAEGAPTPAAAAP) are disordered. RRM domains are found at residues 46–124 (ASLY…WSQR), 134–211 (GNIF…HHVG), 227–304 (TNVY…RAQT), and 330–407 (VNLY…LAQR). The segment at 300-322 (GRAQTKSEREAELKKSHEEKRLE) is disordered. The span at 304–322 (TKSEREAELKKSHEEKRLE) shows a compositional bias: basic and acidic residues. Disordered regions lie at residues 509–572 (APGY…AGRL) and 644–673 (WGKD…EKKE). Residues 569–646 (AGRLDAQSLA…ALRVLAEWGK (78 aa)) form the PABC domain.

It belongs to the polyadenylate-binding protein type-1 family.

The protein resides in the cytoplasm. It localises to the nucleus. Functionally, binds the poly(A) tail of mRNA. Appears to be an important mediator of the multiple roles of the poly(A) tail in mRNA biogenesis, stability and translation. In the nucleus, involved in both mRNA cleavage and polyadenylation. Is also required for efficient mRNA export to the cytoplasm. Acts in concert with a poly(A)-specific nuclease (PAN) to affect poly(A) tail shortening, which may occur concomitantly with either nucleocytoplasmic mRNA transport or translational initiation. In the cytoplasm, stimulates translation initiation and regulates mRNA decay through translation termination-coupled poly(A) shortening, probably mediated by PAN. The chain is Polyadenylate-binding protein, cytoplasmic and nuclear (PAB1) from Cryptococcus neoformans var. neoformans serotype D (strain B-3501A) (Filobasidiella neoformans).